The sequence spans 518 residues: Membrane-bound lytic murein transglycosylase F (518 aa).

Positions 1–21 (MKKLKINYLFIGILALLLAVA) are cleaved as a signal peptide. Positions 22-269 (LWPSIPWFGK…RIEEKYLGHG (248 aa)) are non-LT domain. Residues 270–518 (DDFDYVDTRT…SRKGSEEKQN (249 aa)) form an LT domain region. Glutamate 314 is an active-site residue.

This sequence in the N-terminal section; belongs to the bacterial solute-binding protein 3 family. The protein in the C-terminal section; belongs to the transglycosylase Slt family.

Its subcellular location is the cell outer membrane. The enzyme catalyses Exolytic cleavage of the (1-&gt;4)-beta-glycosidic linkage between N-acetylmuramic acid (MurNAc) and N-acetylglucosamine (GlcNAc) residues in peptidoglycan, from either the reducing or the non-reducing ends of the peptidoglycan chains, with concomitant formation of a 1,6-anhydrobond in the MurNAc residue.. Its function is as follows. Murein-degrading enzyme that degrades murein glycan strands and insoluble, high-molecular weight murein sacculi, with the concomitant formation of a 1,6-anhydromuramoyl product. Lytic transglycosylases (LTs) play an integral role in the metabolism of the peptidoglycan (PG) sacculus. Their lytic action creates space within the PG sacculus to allow for its expansion as well as for the insertion of various structures such as secretion systems and flagella. The polypeptide is Membrane-bound lytic murein transglycosylase F (Escherichia coli O157:H7).